A 242-amino-acid polypeptide reads, in one-letter code: Uridylate kinase (242 aa).

11–14 (KLSG) is a binding site for ATP. UMP is bound at residue Gly-53. Positions 54 and 58 each coordinate ATP. UMP contacts are provided by residues Asp-73 and 134–141 (SGNPFFTT). The ATP site is built by Thr-161, Tyr-167, and Asp-170.

The protein belongs to the UMP kinase family. Homohexamer.

It localises to the cytoplasm. It carries out the reaction UMP + ATP = UDP + ADP. Its pathway is pyrimidine metabolism; CTP biosynthesis via de novo pathway; UDP from UMP (UMPK route): step 1/1. Inhibited by UTP. Functionally, catalyzes the reversible phosphorylation of UMP to UDP. The protein is Uridylate kinase of Thermosynechococcus vestitus (strain NIES-2133 / IAM M-273 / BP-1).